The following is a 718-amino-acid chain: Protein spire homolog 2 (718 aa).

Disordered regions lie at residues 1 to 22 (MARAGGGGAAAPERAGGAARPE) and 143 to 166 (DSSCGAADEGYVGPEEEEEAEGGP). The segment covering 10-21 (AAPERAGGAARP) has biased composition (low complexity). Positions 26–207 (LSLEEVLKVY…RALFVETLEL (182 aa)) constitute a KIND domain. 3 WH2 domains span residues 251–265 (QLMRELRHGVKLKKV), 281–299 (PFEMLMQDIRARNYKLRKV), and 345–362 (LHEKILEEIKQERRLRPV). A Phosphoserine modification is found at Ser-374. The segment at 397–434 (TDTGSGSQRPRPRVLLKAPTLAEMEEMNTSEEEESPCG) is disordered. A compositionally biased stretch (acidic residues) spans 419-432 (EMEEMNTSEEEESP). Ser-443, Ser-445, and Ser-479 each carry phosphoserine. Residues 456 to 518 (MASGLQSAAQ…SSLSSVDGPE (63 aa)) are disordered. Residues 496-513 (SGQSQPLPSSALPSSLSS) show a composition bias toward low complexity. A spir-box region spans residues 538–558 (LALTVEEVVDVRRVLVKAEME).

The protein belongs to the spire family. As to expression, detected in oocytes.

It is found in the cytoplasm. It localises to the cytoskeleton. The protein resides in the cytosol. The protein localises to the cell membrane. Its subcellular location is the cytoplasmic vesicle membrane. Its function is as follows. Acts as an actin nucleation factor, remains associated with the slow-growing pointed end of the new filament. Involved in intracellular vesicle transport along actin fibers, providing a novel link between actin cytoskeleton dynamics and intracellular transport. Required for asymmetric spindle positioning and asymmetric cell division during oocyte meiosis. Required for normal formation of the cleavage furrow and for polar body extrusion during female germ cell meiosis. Also acts in the nucleus: together with SPIRE1 and SPIRE2, promotes assembly of nuclear actin filaments in response to DNA damage in order to facilitate movement of chromatin and repair factors after DNA damage. In Mus musculus (Mouse), this protein is Protein spire homolog 2 (Spire2).